Here is a 138-residue protein sequence, read N- to C-terminus: Acidic phospholipase A2 Cvv-E6e (138 aa).

An N-terminal signal peptide occupies residues 1-16 (MRTLWILAVLLLGVEG). Cystine bridges form between Cys42/Cys131, Cys44/Cys60, Cys59/Cys111, Cys65/Cys138, Cys66/Cys104, Cys73/Cys97, and Cys91/Cys102. Tyr43, Gly45, and Gly47 together coordinate Ca(2+). The active site involves His63. Asp64 contributes to the Ca(2+) binding site. Asp105 is an active-site residue.

Ca(2+) serves as cofactor. Expressed by the venom gland.

The protein resides in the secreted. It carries out the reaction a 1,2-diacyl-sn-glycero-3-phosphocholine + H2O = a 1-acyl-sn-glycero-3-phosphocholine + a fatty acid + H(+). In terms of biological role, snake venom phospholipase A2 (PLA2) that significantly inhibits ADP-induced platelet aggregation in platelet-rich plasma of human, rabbit and guinea pig. PLA2 catalyzes the calcium-dependent hydrolysis of the 2-acyl groups in 3-sn-phosphoglycerides. This chain is Acidic phospholipase A2 Cvv-E6e, found in Crotalus viridis viridis (Prairie rattlesnake).